We begin with the raw amino-acid sequence, 283 residues long: MESPRDILKRHGLRAKYSWGQNFLGDEDALEAIADALNLRADEPVVELGPGLGHLTRFLAATGARVTAVERDRDMVMVLEKEAIPGVRVVSGNAATVDFAQVAGAPDVAVAGNLPYHLTSPILFRVLEQRAHVSRAVFTLQKEVVERLAAEPGNRDYGLLTVLLGMHYDAENVLTLEAWRFHPPPKVDSAVLRLTRRKSPRAPIIDEARFTRVVKASFAHRRKTLINSIKSDPTLGTTETLIAALEAAGVDPQRRAETLTPEEFAAIERALGPLTPATSTPAE.

Asparagine 22, leucine 24, glycine 49, glutamate 70, and asparagine 113 together coordinate S-adenosyl-L-methionine.

Belongs to the class I-like SAM-binding methyltransferase superfamily. rRNA adenine N(6)-methyltransferase family. RsmA subfamily.

It localises to the cytoplasm. It catalyses the reaction adenosine(1518)/adenosine(1519) in 16S rRNA + 4 S-adenosyl-L-methionine = N(6)-dimethyladenosine(1518)/N(6)-dimethyladenosine(1519) in 16S rRNA + 4 S-adenosyl-L-homocysteine + 4 H(+). Functionally, specifically dimethylates two adjacent adenosines (A1518 and A1519) in the loop of a conserved hairpin near the 3'-end of 16S rRNA in the 30S particle. May play a critical role in biogenesis of 30S subunits. This chain is Ribosomal RNA small subunit methyltransferase A, found in Myxococcus xanthus (strain DK1622).